Consider the following 289-residue polypeptide: ATP synthase gamma chain (289 aa).

Belongs to the ATPase gamma chain family. As to quaternary structure, F-type ATPases have 2 components, CF(1) - the catalytic core - and CF(0) - the membrane proton channel. CF(1) has five subunits: alpha(3), beta(3), gamma(1), delta(1), epsilon(1). CF(0) has three main subunits: a, b and c.

The protein localises to the cell inner membrane. Produces ATP from ADP in the presence of a proton gradient across the membrane. The gamma chain is believed to be important in regulating ATPase activity and the flow of protons through the CF(0) complex. This Mannheimia succiniciproducens (strain KCTC 0769BP / MBEL55E) protein is ATP synthase gamma chain.